A 172-amino-acid polypeptide reads, in one-letter code: Large ribosomal subunit protein uL10 (172 aa).

Belongs to the universal ribosomal protein uL10 family. As to quaternary structure, part of the ribosomal stalk of the 50S ribosomal subunit. The N-terminus interacts with L11 and the large rRNA to form the base of the stalk. The C-terminus forms an elongated spine to which L12 dimers bind in a sequential fashion forming a multimeric L10(L12)X complex.

Forms part of the ribosomal stalk, playing a central role in the interaction of the ribosome with GTP-bound translation factors. This Bartonella bacilliformis (strain ATCC 35685 / KC583 / Herrer 020/F12,63) protein is Large ribosomal subunit protein uL10.